Consider the following 139-residue polypeptide: MTERTLVLIKPDAVARGYVGEILGRIERKGLTISALDLRTAPGDIAAAHYAEHEGRPFYPGLLEFITGGPLVAAVLEGPRAIAAFRQLAGGTDPVEKAVPGTIRGDFGLEAQENLVHGSDSVESAEREIALWFPHLAAN.

Residues K10, F58, R86, T92, R104, and N114 each contribute to the ATP site. H117 functions as the Pros-phosphohistidine intermediate in the catalytic mechanism.

The protein belongs to the NDK family. Homotetramer. Requires Mg(2+) as cofactor.

The protein localises to the cytoplasm. It catalyses the reaction a 2'-deoxyribonucleoside 5'-diphosphate + ATP = a 2'-deoxyribonucleoside 5'-triphosphate + ADP. It carries out the reaction a ribonucleoside 5'-diphosphate + ATP = a ribonucleoside 5'-triphosphate + ADP. Major role in the synthesis of nucleoside triphosphates other than ATP. The ATP gamma phosphate is transferred to the NDP beta phosphate via a ping-pong mechanism, using a phosphorylated active-site intermediate. This chain is Nucleoside diphosphate kinase, found in Rhodococcus jostii (strain RHA1).